A 130-amino-acid polypeptide reads, in one-letter code: Glutamate-rich protein 4 (130 aa).

Residues 91–104 (EEEEESSKEEEEDQ) are compositionally biased toward acidic residues. A disordered region spans residues 91–130 (EEEEESSKEEEEDQEPQRKQEEEHLEACPAPHPPDFEMMI). Residues 105-116 (EPQRKQEEEHLE) show a composition bias toward basic and acidic residues.

This is Glutamate-rich protein 4 (ERICH4) from Homo sapiens (Human).